Here is a 260-residue protein sequence, read N- to C-terminus: MSSQVAKAATQGELLEALYGEVTVQELQETNLGVLTPHRGDQRVVFTPLLPPRTQTRISGVLRRLRPTRNTGGLLYLEKVVVVFTPHVPDDAPGEVEVWIHDSLLPNLNSVGPRLRFPLNGGPRLMAFYPPYSIPLMDKSKEMPRCFAIVSELLSASYVGGGSPFSLHIMWQPQVESLAHNYLMRPPRMQKICRGMVKDALGSLSSRKSYIAGAVSHRFALTAANPLPISGDTAEEAGEASSGEPHWVPEATAPRVRKAT.

Positions 230–260 (SGDTAEEAGEASSGEPHWVPEATAPRVRKAT) are disordered.

Functionally, transports viral genome to neighboring plant cells directly through plasmosdesmata, without any budding. The movement protein allows efficient cell to cell propagation, by bypassing the host cell wall barrier. Might act by forming tubules structures that increase the size exclusion limit (SEL) of plasmodesmata, thereby allowing viral ribonucleoproteins to spread directly to neighboring cells. Binds to ssRNA. The sequence is that of Movement protein from Groundnut rosette virus (strain MC1) (GRV).